Reading from the N-terminus, the 278-residue chain is Urease accessory protein UreD (278 aa).

Belongs to the UreD family. UreD, UreF and UreG form a complex that acts as a GTP-hydrolysis-dependent molecular chaperone, activating the urease apoprotein by helping to assemble the nickel containing metallocenter of UreC. The UreE protein probably delivers the nickel.

The protein resides in the cytoplasm. Required for maturation of urease via the functional incorporation of the urease nickel metallocenter. The protein is Urease accessory protein UreD of Leptothrix cholodnii (strain ATCC 51168 / LMG 8142 / SP-6) (Leptothrix discophora (strain SP-6)).